Here is a 274-residue protein sequence, read N- to C-terminus: MKVNIDNKIKLHGFNNLTKTLSFNMYDICYAKSAEDREAYISYIDEQYNADRLTEILTNVTEIIGANILNIAKQDYDPQGASVTILVCENPIEEERKEALVKETPGPLPEIVLAHLDKSHITVHTYPEYHPDEGICTFRADIDVSTCGMISPLRALNYLVHSFEADIMTMDYRVRGFTRDITGRKLFIDHKINSIQNYIPSNIKTKYNMIDVNVYQENIFHTKCRLKQFDLDNYLFGYTKKDLYPKERKKITHKLKKEMDEIFYGKNFDEVYYK.

Serine 119 (schiff-base intermediate with substrate; via pyruvic acid) is an active-site residue. Serine 119 carries the pyruvic acid (Ser); by autocatalysis modification. The active-site Proton acceptor; for processing activity is histidine 124. The active-site Proton donor; for catalytic activity is the cysteine 147.

This sequence belongs to the prokaryotic AdoMetDC family. Type 2 subfamily. As to quaternary structure, heterooctamer of four alpha and four beta chains arranged as a tetramer of alpha/beta heterodimers. It depends on pyruvate as a cofactor. Is synthesized initially as an inactive proenzyme. Formation of the active enzyme involves a self-maturation process in which the active site pyruvoyl group is generated from an internal serine residue via an autocatalytic post-translational modification. Two non-identical subunits are generated from the proenzyme in this reaction, and the pyruvate is formed at the N-terminus of the alpha chain, which is derived from the carboxyl end of the proenzyme. The post-translation cleavage follows an unusual pathway, termed non-hydrolytic serinolysis, in which the side chain hydroxyl group of the serine supplies its oxygen atom to form the C-terminus of the beta chain, while the remainder of the serine residue undergoes an oxidative deamination to produce ammonia and the pyruvoyl group blocking the N-terminus of the alpha chain.

The enzyme catalyses S-adenosyl-L-methionine + H(+) = S-adenosyl 3-(methylsulfanyl)propylamine + CO2. It participates in amine and polyamine biosynthesis; S-adenosylmethioninamine biosynthesis; S-adenosylmethioninamine from S-adenosyl-L-methionine: step 1/1. In terms of biological role, catalyzes the decarboxylation of S-adenosylmethionine to S-adenosylmethioninamine (dcAdoMet), the propylamine donor required for the synthesis of the polyamines spermine and spermidine from the diamine putrescine. The polypeptide is S-adenosylmethionine decarboxylase proenzyme (Clostridium acetobutylicum (strain ATCC 824 / DSM 792 / JCM 1419 / IAM 19013 / LMG 5710 / NBRC 13948 / NRRL B-527 / VKM B-1787 / 2291 / W)).